The primary structure comprises 305 residues: Aquaporin NIP6-1 (305 aa).

A disordered region spans residues 1-30; that stretch reads MDHEEIPSTPSTPATTPGTPGAPLFGGFEG. Over residues 7–23 the composition is skewed to low complexity; sequence PSTPSTPATTPGTPGAP. 2 helical membrane passes run 82 to 102 and 111 to 131; these read LGAE…TAIV and TLIG…LSTG. The NPA 1 signature appears at 139-141; the sequence is NPA. The next 3 membrane-spanning stretches (helical) occupy residues 159–179, 194–214, and 221–241; these read VYIG…KAVF, LSQA…VVTA, and AVGE…ILIA. The short motif at 250 to 252 is the NPA 2 element; sequence NPV. Residues 267–287 form a helical membrane-spanning segment; the sequence is IWVYLTAPILGALIGAGTYTI. S302 bears the Phosphoserine mark.

Belongs to the MIP/aquaporin (TC 1.A.8) family. NIP (TC 1.A.8.12) subfamily. As to expression, expressed in roots.

It localises to the membrane. Functionally, transports glycerol, urea and formamide, in Xenopus laevis oocytes. Very low water transport activity. The sequence is that of Aquaporin NIP6-1 (NIP6-1) from Arabidopsis thaliana (Mouse-ear cress).